A 129-amino-acid chain; its full sequence is uncharacterized protein (129 aa).

Residues 1-21 (MAQNKTIAVALLLATLVAVMG) form the signal peptide.

This is an uncharacterized protein from Oryza sativa subsp. japonica (Rice).